We begin with the raw amino-acid sequence, 257 residues long: NAD kinase (257 aa).

Asp-46 (proton acceptor) is an active-site residue. NAD(+) contacts are provided by residues 46-47 (DG), 116-117 (NE), Asp-146, Ala-154, 157-162 (TAYNLS), and Asn-218.

The protein belongs to the NAD kinase family. A divalent metal cation is required as a cofactor.

It localises to the cytoplasm. It catalyses the reaction NAD(+) + ATP = ADP + NADP(+) + H(+). Functionally, involved in the regulation of the intracellular balance of NAD and NADP, and is a key enzyme in the biosynthesis of NADP. Catalyzes specifically the phosphorylation on 2'-hydroxyl of the adenosine moiety of NAD to yield NADP. The chain is NAD kinase from Brucella suis biovar 1 (strain 1330).